A 349-amino-acid chain; its full sequence is Isopentenyl-diphosphate delta-isomerase (349 aa).

7–8 (RK) is a substrate binding site. FMN contacts are provided by residues Ser65, 66-68 (SMT), Ser96, and Asn124. Residue 96 to 98 (SQR) participates in substrate binding. Gln159 contacts substrate. Mg(2+) is bound at residue Glu160. FMN is bound by residues Lys191, Thr221, 271–273 (GIR), and 292–293 (AA).

The protein belongs to the IPP isomerase type 2 family. In terms of assembly, homooctamer. Dimer of tetramers. It depends on FMN as a cofactor. NADPH is required as a cofactor. Mg(2+) serves as cofactor.

Its subcellular location is the cytoplasm. The catalysed reaction is isopentenyl diphosphate = dimethylallyl diphosphate. Its function is as follows. Involved in the biosynthesis of isoprenoids. Catalyzes the 1,3-allylic rearrangement of the homoallylic substrate isopentenyl (IPP) to its allylic isomer, dimethylallyl diphosphate (DMAPP). This is Isopentenyl-diphosphate delta-isomerase from Synechocystis sp. (strain ATCC 27184 / PCC 6803 / Kazusa).